The chain runs to 900 residues: Zinc finger protein 62 homolog (900 aa).

A disordered region spans residues 1-97 (MSHLKTSTED…EASEKSLHLS (97 aa)). Residue Lys5 forms a Glycyl lysine isopeptide (Lys-Gly) (interchain with G-Cter in SUMO2) linkage. Residues 9–18 (EDEEPTEEYE) show a composition bias toward acidic residues. Positions 47-73 (SKVENQQKKPVENRMKEDKSSIREAIS) are enriched in basic and acidic residues. Residues Lys48, Lys62, Lys65, Lys82, and Lys92 each participate in a glycyl lysine isopeptide (Lys-Gly) (interchain with G-Cter in SUMO2) cross-link. The segment covering 83-94 (TEQEGEASEKSL) has biased composition (basic and acidic residues). 13 consecutive C2H2-type zinc fingers follow at residues 225–247 (CKCDECGKSFNYSSVLDQHKRIH), 253–275 (YECGECGKAFRNSSGLRVHKRIH), 281–303 (YECDICGKTFSNSSGLRVHKRIH), 309–331 (YECDECGKAFITCRTLLNHKSIH), 337–359 (YKCDECEKSFNYSSLLIQHKVIH), 365–387 (YECDECGKAFRNSSGLIVHKRIH), 393–415 (YKCDVCGKAFSYSSGLAVHKSIH), 421–443 (HECKECGKSFSYNSLLLQHRTIH), 449–471 (YVCDVCGKTFRNNAGLKVHRRLH), 477–499 (YKCDVCGKAYISRSSLKNHKGIH), 505–527 (YKCSYCEKSFNYSSALEQHKRIH), 533–555 (FGCDECGKAFRNNSGLKVHKRIH), and 561–583 (YKCEECGKAYISLSSLINHKSVH). Lys587 participates in a covalent cross-link: Glycyl lysine isopeptide (Lys-Gly) (interchain with G-Cter in SUMO2). C2H2-type zinc fingers lie at residues 589–611 (FKCDECEKAFITYRTLTNHKKVH), 617–639 (YKCDVCEKSFNYTSLLSQHRRVH), 645–667 (YECDRCEKVFRNNSSLKVHKRIH), 673–695 (YECDVCGKAYISHSSLINHKSTH), 701–723 (HTCDECGKAFFSSRTLISHKRVH), 729–751 (FKCVECGKSFSYSSLLSQHKRIH), 757–779 (YVCDRCGKAFRNSSGLTVHKRIH), 785–807 (YECDECGKAYISHSSLINHKSVH), 813–834 (YNCECGKSFNYRSVLDQHKRIH), and 840–862 (YRCNECGKAFNIRSNLTKHKRTH). Residue Lys748 forms a Glycyl lysine isopeptide (Lys-Gly) (interchain with G-Cter in SUMO2) linkage. Residue Lys882 forms a Glycyl lysine isopeptide (Lys-Gly) (interchain with G-Cter in SUMO2) linkage.

Belongs to the krueppel C2H2-type zinc-finger protein family.

The protein resides in the nucleus. Its function is as follows. May play a role in differentiating skeletal muscle. The polypeptide is Zinc finger protein 62 homolog (ZFP62) (Homo sapiens (Human)).